Consider the following 33-residue polypeptide: Vejocalcin (33 aa).

Intrachain disulfides connect cysteine 3–cysteine 17, cysteine 10–cysteine 21, and cysteine 16–cysteine 32. The segment at 23-24 (RR) is essential for stimulation of [3H]ryanodine binding to RYR1.

In terms of tissue distribution, expressed by the venom gland.

The protein localises to the secreted. This toxin stabilizes ryanodine receptor 1 (RyR1) opening in a long-lasting subconductance state (60% of the full conductance state). Furthermore, it triggers calcium release from sarcoplasmic vesicles (31 nM are enough to induce a sharp release, and 65% of the total calcium is released after toxin (100 nM) addition) probably by acting as a cell-penetrating peptide (CPP). In addition, it has been shown to dose-dependently stimulate ryanodine binding to RyR1 (EC(50)=3.7 nM). It also augments the bell-shaped calcium-[3H]ryanodine binding curve that is maximal at about 10 uM calcium concentration. It binds a different site as ryanodine. It acts synergistically with caffeine. In vivo, intracerebroventricular injection into mice induces neurotoxic symptoms, followed by death. The protein is Vejocalcin of Vaejovis mexicanus (Mexican scorpion).